The following is a 134-amino-acid chain: Small ribosomal subunit protein bS6 (134 aa).

Positions 103–134 (AAPVKSAEEGTEEVAAEAATEAPAETTTTVEG) are disordered. The segment covering 118-134 (AEAATEAPAETTTTVEG) has biased composition (low complexity).

It belongs to the bacterial ribosomal protein bS6 family.

Its function is as follows. Binds together with bS18 to 16S ribosomal RNA. This is Small ribosomal subunit protein bS6 from Citrifermentans bemidjiense (strain ATCC BAA-1014 / DSM 16622 / JCM 12645 / Bem) (Geobacter bemidjiensis).